A 333-amino-acid chain; its full sequence is Transcription factor HHO6 (333 aa).

Residues 189–249 (ALRKQRRCWN…HLQKYRLHIR (61 aa)) enclose the HTH myb-type domain. Positions 220-245 (PKQIREHMQEEGLTNDEVKSHLQKYR) form a DNA-binding region, H-T-H motif. The interval 274–333 (DEEETCEGGESLKRSNAQSDSPQGPLQLPSTTTTTGGDSSMEDVEDAKSESFQLERLRSP) is disordered. Positions 287–303 (RSNAQSDSPQGPLQLPS) are enriched in polar residues. A compositionally biased stretch (basic and acidic residues) spans 319-333 (DAKSESFQLERLRSP).

The protein resides in the nucleus. Functionally, probable transcription factor involved in phosphate signaling in roots. The sequence is that of Transcription factor HHO6 from Arabidopsis thaliana (Mouse-ear cress).